We begin with the raw amino-acid sequence, 117 residues long: MPLYEHVMIARQDLSNSQAEGLIEHFGAVLSDNGGKLVDQEYWGVKTMAYKINKNRKGHYAFLRSDAPSSAVQEMERLMRLHDDVMRVLTIKVEEHAEGPSVQMQKRDERDNRRERR.

A disordered region spans residues 96–117 (HAEGPSVQMQKRDERDNRRERR). Basic and acidic residues predominate over residues 105-117 (QKRDERDNRRERR).

This sequence belongs to the bacterial ribosomal protein bS6 family.

In terms of biological role, binds together with bS18 to 16S ribosomal RNA. The chain is Small ribosomal subunit protein bS6 from Ruegeria sp. (strain TM1040) (Silicibacter sp.).